The sequence spans 328 residues: Global transcription regulator sge1 (328 aa).

2 disordered regions span residues 94-120 (PGEK…PRQR) and 251-293 (QMHQ…QYVH). 3 stretches are compositionally biased toward low complexity: residues 106-116 (KSTTQSGGISK), 251-261 (QMHQPQVHQPL), and 282-293 (AHQPQVHQQYVH).

It belongs to the MIT1/WOR1 family.

The protein localises to the nucleus. Global transcriptional regulator of transcription that impacts, but is not absolutely required for secondary metabolism and pathogenicity on maize. Regulates synthesis of multiple secondary metabolites, including fumonisins and fusarins. The polypeptide is Global transcription regulator sge1 (Gibberella moniliformis (strain M3125 / FGSC 7600) (Maize ear and stalk rot fungus)).